We begin with the raw amino-acid sequence, 117 residues long: G antigen 4 (117 aa).

Residues 1–117 (MSWRGRSTYY…PEEGEKQSQC (117 aa)) are disordered. Composition is skewed to acidic residues over residues 32 to 45 (FSDEVEPATPEEGE) and 87 to 96 (ECEDGPDGQE). Positions 103–117 (EEVKTPEEGEKQSQC) are enriched in basic and acidic residues.

The protein belongs to the GAGE family. As to expression, expressed in a variety of tumor tissues but not in normal tissues, except testis.

Its function is as follows. Antigen, recognized on melanoma by autologous cytolytic T-lymphocytes. The polypeptide is G antigen 4 (Homo sapiens (Human)).